Consider the following 181-residue polypeptide: MMSSKQDEKIILGQINGIYGVQGWVKIFSHTDPRQNILSYSPWLVKVKNEWRTFQVEEGRAQQGGKSVVAKLEGIDDRDLAREYIGCEIAILPEQLPATEEGFYWMQLIGCQVTSVEGEDLGQVTEIVETGAHDVLRVEKQSDAGLVSTLIPFVMETFILDVDVESKQIQVDWQLEDATES.

One can recognise a PRC barrel domain in the interval 100–177 (EEGFYWMQLI…QIQVDWQLED (78 aa)).

The protein belongs to the RimM family. As to quaternary structure, binds ribosomal protein uS19.

It localises to the cytoplasm. In terms of biological role, an accessory protein needed during the final step in the assembly of 30S ribosomal subunit, possibly for assembly of the head region. Essential for efficient processing of 16S rRNA. May be needed both before and after RbfA during the maturation of 16S rRNA. It has affinity for free ribosomal 30S subunits but not for 70S ribosomes. In Hydrogenovibrio crunogenus (strain DSM 25203 / XCL-2) (Thiomicrospira crunogena), this protein is Ribosome maturation factor RimM.